A 398-amino-acid polypeptide reads, in one-letter code: 1-deoxy-D-xylulose 5-phosphate reductoisomerase (398 aa).

NADPH-binding residues include T11, G12, S13, I14, R38, N39, and N125. K126 lines the 1-deoxy-D-xylulose 5-phosphate pocket. E127 lines the NADPH pocket. D151 contributes to the Mn(2+) binding site. S152, E153, S179, and H202 together coordinate 1-deoxy-D-xylulose 5-phosphate. Mn(2+) is bound at residue E153. G208 lines the NADPH pocket. 1-deoxy-D-xylulose 5-phosphate contacts are provided by S215, N220, K221, and E224. Position 224 (E224) interacts with Mn(2+).

It belongs to the DXR family. Requires Mg(2+) as cofactor. The cofactor is Mn(2+).

The catalysed reaction is 2-C-methyl-D-erythritol 4-phosphate + NADP(+) = 1-deoxy-D-xylulose 5-phosphate + NADPH + H(+). The protein operates within isoprenoid biosynthesis; isopentenyl diphosphate biosynthesis via DXP pathway; isopentenyl diphosphate from 1-deoxy-D-xylulose 5-phosphate: step 1/6. Catalyzes the NADPH-dependent rearrangement and reduction of 1-deoxy-D-xylulose-5-phosphate (DXP) to 2-C-methyl-D-erythritol 4-phosphate (MEP). The sequence is that of 1-deoxy-D-xylulose 5-phosphate reductoisomerase from Burkholderia vietnamiensis (strain G4 / LMG 22486) (Burkholderia cepacia (strain R1808)).